A 156-amino-acid chain; its full sequence is MSRKKTQPKKVVTPDPIFNSTIIPKLINSIMYDGKKVVAEKIVYEAIEKIKSKTKEEPINVFNEAINNIKPTVEVRSRRVGGATYQVPVEVKTKRAQALAIRWLVDASRKRKDKHMSDKIFNELYDAYEKKGSAVKKREDVHKMAESNKAFAHFRW.

This sequence belongs to the universal ribosomal protein uS7 family. Part of the 30S ribosomal subunit. Contacts proteins S9 and S11.

One of the primary rRNA binding proteins, it binds directly to 16S rRNA where it nucleates assembly of the head domain of the 30S subunit. Is located at the subunit interface close to the decoding center, probably blocks exit of the E-site tRNA. In Pelagibacter ubique (strain HTCC1062), this protein is Small ribosomal subunit protein uS7.